Reading from the N-terminus, the 172-residue chain is RNA silencing suppressor p19 (172 aa).

A compositionally biased stretch (basic and acidic residues) spans 1–20 (MERVIQGNDAREQANGERWD). The disordered stretch occupies residues 1-37 (MERVIQGNDAREQANGERWDGGSGGTTSGFKLPDESP).

The protein belongs to the tombusvirus protein p19 family. Homodimer.

In terms of biological role, viral suppressor of RNA silencing which binds specifically to silencing RNAs (siRNAs). Acts as a molecular caliper to specifically select siRNAs based on the length of the duplex region of the RNA. In Cynara cardunculus var. scolymus (Globe artichoke), this protein is RNA silencing suppressor p19.